We begin with the raw amino-acid sequence, 712 residues long: Frizzled-6 (712 aa).

Positions 1 to 18 are cleaved as a signal peptide; it reads MEMFTFLLTCVFLPFVRG. In terms of domain architecture, FZ spans 19–132; sequence HSLFTCEPIT…CDRLQYCDET (114 aa). Over 19–201 the chain is Extracellular; the sequence is HSLFTCEPIT…SDELEFAKSF (183 aa). Intrachain disulfides connect cysteine 24/cysteine 85, cysteine 32/cysteine 78, cysteine 69/cysteine 106, cysteine 95/cysteine 129, and cysteine 99/cysteine 123. A glycan (N-linked (GlcNAc...) asparagine) is linked at asparagine 38. A helical transmembrane segment spans residues 202 to 222; it reads IGIVSIFCLCATLFTFLTFLI. Over 223 to 233 the chain is Cytoplasmic; the sequence is DVKRFRYPERP. The chain crosses the membrane as a helical span at residues 234-254; sequence IIYYSVCYSIVSLMYFIGFLL. At 255 to 284 the chain is on the extracellular side; it reads GDRTACNKADEKLELGDTVVLGSQNKACTV. Residues 285 to 305 traverse the membrane as a helical segment; the sequence is LFMFLYFFTMAGTVWWVILTI. Over 306–324 the chain is Cytoplasmic; sequence TWFLAAGRKWSCEAIEQKA. Residues 325-345 traverse the membrane as a helical segment; sequence VWFHAVAWGIPGFLTVMLLAM. The Extracellular segment spans residues 346–370; the sequence is NKVEGDNISGVCFVGLYDLDASRYF. N-linked (GlcNAc...) asparagine glycosylation is present at asparagine 352. A helical membrane pass occupies residues 371-391; sequence VLLPLCLCVFVGLSLLLAGII. Residues 392 to 416 are Cytoplasmic-facing; it reads SLNHVRQVIQHDGRNQEKLKKFMIR. Residues 417-437 form a helical membrane-spanning segment; the sequence is IGVFSGLYLVPLVTLLGCYVY. Topologically, residues 438 to 473 are extracellular; that stretch reads EQVNRITWEITWVSDHCRQYHIPCPYQAKTETRPEL. The helical transmembrane segment at 474–494 threads the bilayer; it reads ALFMIKYLMTLIVGISAVFWV. Over 495 to 712 the chain is Cytoplasmic; that stretch reads GSKKTCTEWA…EHGTGSHSDT (218 aa). Residues 498–503 carry the Lys-Thr-X-X-X-Trp motif, mediates interaction with the PDZ domain of Dvl family members motif; it reads KTCTEW. Residues 588-712 are disordered; it reads EIQTSPETSV…EHGTGSHSDT (125 aa). 2 stretches are compositionally biased toward basic and acidic residues: residues 628–637 and 652–664; these read LCEEQADRKG and TRSE…KSDV. The span at 668 to 693 shows a compositional bias: polar residues; it reads GPMQSSSLQVPGSSEPGSLKGSTSLL. The span at 700–712 shows a compositional bias: basic and acidic residues; sequence GRKEHGTGSHSDT.

It belongs to the G-protein coupled receptor Fz/Smo family. In terms of assembly, interacts with LMBR1L. In terms of processing, ubiquitinated by ZNRF3, leading to its degradation by the proteasome.

The protein localises to the membrane. It localises to the cell membrane. It is found in the cell surface. Its subcellular location is the apical cell membrane. The protein resides in the cytoplasmic vesicle membrane. The protein localises to the endoplasmic reticulum membrane. Receptor for Wnt proteins. Most of frizzled receptors are coupled to the beta-catenin canonical signaling pathway, which leads to the activation of disheveled proteins, inhibition of GSK-3 kinase, nuclear accumulation of beta-catenin and activation of Wnt target genes. A second signaling pathway involving PKC and calcium fluxes has been seen for some family members, but it is not yet clear if it represents a distinct pathway or if it can be integrated in the canonical pathway, as PKC seems to be required for Wnt-mediated inactivation of GSK-3 kinase. Both pathways seem to involve interactions with G-proteins. Activation by Wnt5A stimulates PKC activity via a G-protein-dependent mechanism. Involved in transduction and intercellular transmission of polarity information during tissue morphogenesis and/or in differentiated tissues. Together with FZD3, is involved in the neural tube closure and plays a role in the regulation of the establishment of planar cell polarity (PCP), particularly in the orientation of asymmetric bundles of stereocilia on the apical faces of a subset of auditory and vestibular sensory cells located in the inner ear. The chain is Frizzled-6 (FZD6) from Canis lupus familiaris (Dog).